The chain runs to 349 residues: Terpene synthase 2 (349 aa).

The DDxx(x)D/E motif motif lies at 84–89 (DDLFDG). Residues 229–237 (NDCVSYEKE) carry the NDxxSxxxD/E motif motif.

The protein belongs to the terpene synthase family.

It catalyses the reaction (2E,6E)-farnesyl diphosphate = (3S)-(+)-asterisca-2(9),6-diene + diphosphate. The catalysed reaction is (2E)-geranyl diphosphate = (Z)-beta-ocimene + diphosphate. The enzyme catalyses (2E)-geranyl diphosphate + H2O = linalool + diphosphate. Functionally, terpene synthase that converts its substrate farnesyl diphosphate (FPP) into the sesquiterpene (3S)-(+)-asterisca-2(9),6-diene. Is also able to convert geranyl diphosphate (GPP) into a mixture of monoterpenes including (Z)-beta-ocimene, allo-ocimene and linalool. In Dictyostelium discoideum (Social amoeba), this protein is Terpene synthase 2.